We begin with the raw amino-acid sequence, 355 residues long: Protein FIP1 (355 aa).

A run of 4 helical transmembrane segments spans residues tyrosine 42–phenylalanine 62, leucine 72–valine 92, valine 113–valine 133, and isoleucine 149–valine 169. The stretch at leucine 220–glutamate 337 forms a coiled coil. The segment covering asparagine 331 to serine 340 has biased composition (basic and acidic residues). The tract at residues asparagine 331–proline 355 is disordered.

It belongs to the TMEM192 family. As to quaternary structure, interacts with FRI.

The protein localises to the membrane. The chain is Protein FIP1 from Arabidopsis thaliana (Mouse-ear cress).